Reading from the N-terminus, the 208-residue chain is UPF0323 lipoprotein HH_0014 (208 aa).

Residues 1 to 26 form the signal peptide; it reads MKHIHKIKNYAMVGGLGVMAVFALNA. Cysteine 27 carries N-palmitoyl cysteine lipidation. The S-diacylglycerol cysteine moiety is linked to residue cysteine 27. Residues 148–208 form a disordered region; it reads ANSQRNYKSP…TNRNTGSMGS (61 aa). Low complexity-rich tracts occupy residues 169–185 and 193–208; these read SAKT…SGKS and SSQS…SMGS.

This sequence belongs to the UPF0323 family.

The protein resides in the cell membrane. The sequence is that of UPF0323 lipoprotein HH_0014 from Helicobacter hepaticus (strain ATCC 51449 / 3B1).